A 365-amino-acid polypeptide reads, in one-letter code: IgG receptor FcRn large subunit p51 (365 aa).

Positions 1-21 are cleaved as a signal peptide; sequence MGMPLPWALSLLLVLLPQTWG. Residues 22–110 form an alpha-1 region; that stretch reads SETRPPLMYH…KTLEKILNGT (89 aa). The Extracellular segment spans residues 22 to 297; it reads SETRPPLMYH…VDLDSSARSS (276 aa). N-linked (GlcNAc...) asparagine glycans are attached at residues Asn108, Asn125, Asn149, and Asn246. Residues 111 to 200 form an alpha-2 region; sequence YTLQGLLGCE…ERGRRNLEWK (90 aa). Disulfide bonds link Cys119–Cys182 and Cys221–Cys275. The tract at residues 201–290 is alpha-3; sequence EPPSMRLKAR…GLAQPLTVDL (90 aa). The Ig-like C1-type domain maps to 202-289; that stretch reads PPSMRLKARP…EGLAQPLTVD (88 aa). The interval 291–297 is connecting peptide; sequence DSSARSS. A helical membrane pass occupies residues 298–321; it reads VPVVGIVLGLLLVVVAIAGGVLLW. At 322–365 the chain is on the cytoplasmic side; the sequence is GRMRSGLPAPWLSLSGDDSGDLLPGGNLPPEAEPQGANAFPATS. The residue at position 334 (Ser334) is a Phosphoserine. The tract at residues 343–365 is disordered; sequence LLPGGNLPPEAEPQGANAFPATS.

Belongs to the immunoglobulin superfamily. As to quaternary structure, fcRn complex consists of two subunits: p51, and p14 which is equivalent to beta-2-microglobulin. It forms an MHC class I-like heterodimer. Interacts with albumin/ALB; this interaction regulates ALB homeostasis. Intestinal epithelium of suckling rodents. Expressed in neonatal intestine and fetal yolk sac.

The protein localises to the cell membrane. The protein resides in the endosome membrane. Cell surface receptor that transfers passive humoral immunity from the mother to the newborn. Binds to the Fc region of monomeric immunoglobulin gamma and mediates its selective uptake from milk. IgG in the milk is bound at the apical surface of the intestinal epithelium. The resultant FcRn-IgG complexes are transcytosed across the intestinal epithelium and IgG is released from FcRn into blood or tissue fluids. Throughout life, contributes to effective humoral immunity by recycling IgG and extending its half-life in the circulation. Mechanistically, monomeric IgG binding to FcRn in acidic endosomes of endothelial and hematopoietic cells recycles IgG to the cell surface where it is released into the circulation. In addition of IgG, regulates homeostasis of the other most abundant circulating protein albumin/ALB. In Mus musculus (Mouse), this protein is IgG receptor FcRn large subunit p51 (Fcgrt).